Reading from the N-terminus, the 601-residue chain is Glutamine--tRNA ligase (601 aa).

The 'HIGH' region motif lies at 76 to 86 (PEPNGYLHIGH). ATP contacts are provided by residues 77–79 (EPN) and 83–89 (HIGHAKS). L-glutamine is bound by residues Asp-109 and Tyr-253. Residues Thr-272, 301-302 (RL), and 309-311 (MSK) contribute to the ATP site. The 'KMSKS' region signature appears at 308–312 (VMSKR).

This sequence belongs to the class-I aminoacyl-tRNA synthetase family. Monomer.

It localises to the cytoplasm. The enzyme catalyses tRNA(Gln) + L-glutamine + ATP = L-glutaminyl-tRNA(Gln) + AMP + diphosphate. This is Glutamine--tRNA ligase from Rhodopirellula baltica (strain DSM 10527 / NCIMB 13988 / SH1).